Reading from the N-terminus, the 300-residue chain is Probable protein phosphatase 2C 3 (300 aa).

Residues Ile-23–Leu-298 form the PPM-type phosphatase domain. Asp-57, Gly-58, Asp-237, and Asp-289 together coordinate Mn(2+).

This sequence belongs to the PP2C family. It depends on Mg(2+) as a cofactor. The cofactor is Mn(2+).

Its subcellular location is the membrane. It catalyses the reaction O-phospho-L-seryl-[protein] + H2O = L-seryl-[protein] + phosphate. The enzyme catalyses O-phospho-L-threonyl-[protein] + H2O = L-threonyl-[protein] + phosphate. Functionally, enzyme with a broad specificity. The protein is Probable protein phosphatase 2C 3 of Paramecium tetraurelia.